We begin with the raw amino-acid sequence, 516 residues long: Methionine--tRNA ligase (516 aa).

The short motif at 14–24 (SYPNGKPHIGH) is the 'HIGH' region element. The 'KMSKS' region motif lies at 302 to 306 (KMSKS). K305 serves as a coordination point for ATP.

This sequence belongs to the class-I aminoacyl-tRNA synthetase family. MetG type 2B subfamily. In terms of assembly, monomer.

The protein resides in the cytoplasm. The catalysed reaction is tRNA(Met) + L-methionine + ATP = L-methionyl-tRNA(Met) + AMP + diphosphate. Its function is as follows. Is required not only for elongation of protein synthesis but also for the initiation of all mRNA translation through initiator tRNA(fMet) aminoacylation. In Rhizobium meliloti (strain 1021) (Ensifer meliloti), this protein is Methionine--tRNA ligase.